Consider the following 238-residue polypeptide: 1-(5-phosphoribosyl)-5-[(5-phosphoribosylamino)methylideneamino] imidazole-4-carboxamide isomerase (238 aa).

Aspartate 8 acts as the Proton acceptor in catalysis. Aspartate 129 functions as the Proton donor in the catalytic mechanism.

It belongs to the HisA/HisF family.

The protein resides in the cytoplasm. The enzyme catalyses 1-(5-phospho-beta-D-ribosyl)-5-[(5-phospho-beta-D-ribosylamino)methylideneamino]imidazole-4-carboxamide = 5-[(5-phospho-1-deoxy-D-ribulos-1-ylimino)methylamino]-1-(5-phospho-beta-D-ribosyl)imidazole-4-carboxamide. The protein operates within amino-acid biosynthesis; L-histidine biosynthesis; L-histidine from 5-phospho-alpha-D-ribose 1-diphosphate: step 4/9. The polypeptide is 1-(5-phosphoribosyl)-5-[(5-phosphoribosylamino)methylideneamino] imidazole-4-carboxamide isomerase (Myxococcus xanthus (strain DK1622)).